A 97-amino-acid polypeptide reads, in one-letter code: Large ribosomal subunit protein bL25 (97 aa).

It belongs to the bacterial ribosomal protein bL25 family. As to quaternary structure, part of the 50S ribosomal subunit; part of the 5S rRNA/L5/L18/L25 subcomplex. Contacts the 5S rRNA. Binds to the 5S rRNA independently of L5 and L18.

Functionally, this is one of the proteins that binds to the 5S RNA in the ribosome where it forms part of the central protuberance. This Buchnera aphidicola subsp. Baizongia pistaciae (strain Bp) protein is Large ribosomal subunit protein bL25.